We begin with the raw amino-acid sequence, 152 residues long: VQ motif-containing protein 8, chloroplastic (152 aa).

Positions 1–42 (MIPTRCNEINGSRPSSLKLAGESHTIKKTSSCKSKPRPHGRA) are disordered. Residues 1 to 58 (MIPTRCNEINGSRPSSLKLAGESHTIKKTSSCKSKPRPHGRASPVIIYAHSPKVIHTR) constitute a chloroplast transit peptide. The VQ motif lies at 62-71 (FMALVQRLTG). The disordered stretch occupies residues 80–108 (TSESSSSVVTEEVNVGDDNTAAPFSQDRT). A compositionally biased stretch (low complexity) spans 81 to 92 (SESSSSVVTEEV).

The protein localises to the plastid. Its subcellular location is the chloroplast. May be involved in chloroplast development. The polypeptide is VQ motif-containing protein 8, chloroplastic (Arabidopsis thaliana (Mouse-ear cress)).